Consider the following 203-residue polypeptide: Large ribosomal subunit protein uL13 (203 aa).

Residue Ala-2 is modified to N-acetylalanine. A Citrulline modification is found at Arg-59. Ser-77 bears the Phosphoserine mark. At Arg-140 the chain carries Citrulline. N6-acetyllysine is present on Lys-191.

The protein belongs to the universal ribosomal protein uL13 family. As to quaternary structure, component of the 60S ribosome. Component of the GAIT complex. Interacts with EIF4G1. Post-translationally, phosphorylation at Ser-77 upon interferon-gamma treatment in macrophages involves a DAPK1-DAPK3 kinase cascade and is causing release from the ribosome, association with the GAIT complex and subsequent involvement in transcript-selective translation inhibition. In terms of processing, citrullinated by PADI4.

It localises to the cytoplasm. Associated with ribosomes but is not required for canonical ribosome function and has extra-ribosomal functions. Component of the GAIT (gamma interferon-activated inhibitor of translation) complex which mediates interferon-gamma-induced transcript-selective translation inhibition in inflammation processes. Upon interferon-gamma activation and subsequent phosphorylation dissociates from the ribosome and assembles into the GAIT complex which binds to stem loop-containing GAIT elements in the 3'-UTR of diverse inflammatory mRNAs (such as ceruplasmin) and suppresses their translation. In the GAIT complex interacts with m7G cap-bound eIF4G at or near the eIF3-binding site and blocks the recruitment of the 43S ribosomal complex. Involved in methylation of rRNA. The sequence is that of Large ribosomal subunit protein uL13 (RPL13A) from Bos taurus (Bovine).